The following is a 255-amino-acid chain: Hydroxyacylglutathione hydrolase (255 aa).

Zn(2+) is bound by residues H56, H58, D60, H61, H114, D133, and H171.

The protein belongs to the metallo-beta-lactamase superfamily. Glyoxalase II family. In terms of assembly, monomer. Zn(2+) is required as a cofactor.

It catalyses the reaction an S-(2-hydroxyacyl)glutathione + H2O = a 2-hydroxy carboxylate + glutathione + H(+). Its pathway is secondary metabolite metabolism; methylglyoxal degradation; (R)-lactate from methylglyoxal: step 2/2. In terms of biological role, thiolesterase that catalyzes the hydrolysis of S-D-lactoyl-glutathione to form glutathione and D-lactic acid. This is Hydroxyacylglutathione hydrolase from Rhodopseudomonas palustris (strain BisA53).